The chain runs to 427 residues: Proline--tRNA ligase (427 aa).

It belongs to the class-II aminoacyl-tRNA synthetase family. ProS type 2 subfamily. As to quaternary structure, homodimer.

It localises to the cytoplasm. It catalyses the reaction tRNA(Pro) + L-proline + ATP = L-prolyl-tRNA(Pro) + AMP + diphosphate. In terms of biological role, catalyzes the attachment of proline to tRNA(Pro) in a two-step reaction: proline is first activated by ATP to form Pro-AMP and then transferred to the acceptor end of tRNA(Pro). The polypeptide is Proline--tRNA ligase (Rickettsia akari (strain Hartford)).